Here is a 764-residue protein sequence, read N- to C-terminus: Metabotropic glutamate receptor-like protein H (764 aa).

The first 20 residues, 1 to 20, serve as a signal peptide directing secretion; the sequence is MKNILKILILILICINKINC. Residues 21–393 lie on the Extracellular side of the membrane; the sequence is LDGDGKQFRM…EVEFSQSIQN (373 aa). 5 N-linked (GlcNAc...) asparagine glycosylation sites follow: Asn-72, Asn-260, Asn-278, Asn-344, and Asn-379. The helical transmembrane segment at 394–414 threads the bilayer; sequence GFSITTGILIGITILMMIGII. Over 415-427 the chain is Cytoplasmic; the sequence is KYSKTPSMRSASP. The chain crosses the membrane as a helical span at residues 428–448; it reads IFLNFILAGGIIVYIGIIVWV. Residues 449 to 464 are Extracellular-facing; it reads GPMSTHSCNARLWLVT. Residues 465–485 traverse the membrane as a helical segment; sequence LGFSTLIGSLVVKNFRIWLIF. Residues 486–500 are Cytoplasmic-facing; sequence DNPELKSIKITNYQL. The helical transmembrane segment at 501 to 521 threads the bilayer; the sequence is FPWVGACLVINIILMAILTSV. The Extracellular segment spans residues 522–552; sequence GDLKQIDAMNIDSLGKYEYMKVCKMNSSGAS. A glycan (N-linked (GlcNAc...) asparagine) is linked at Asn-547. Residues 553–573 traverse the membrane as a helical segment; that stretch reads TLYTILAYFAALLLVGVFVSW. Topologically, residues 574–587 are cytoplasmic; it reads KIRIVDILEFNESG. Residues 588–608 traverse the membrane as a helical segment; it reads AIANTLYAISFCLFVIVPLMI. The Extracellular segment spans residues 609 to 617; that stretch reads SPQDMQSET. A helical membrane pass occupies residues 618-638; that stretch reads IILCTTGLFITTAALLIIFIP. The Cytoplasmic portion of the chain corresponds to 639–764; it reads KFWRVFRKGA…IIVNDSENNN (126 aa). Positions 664–764 are disordered; it reads ATARAESGSK…IIVNDSENNN (101 aa). Positions 671–690 are enriched in low complexity; that stretch reads GSKGSNGNASSGNRTNRRGN. The segment covering 707–719 has biased composition (basic and acidic residues); sequence ENQKEKEKIKDDV. The span at 731–748 shows a compositional bias: acidic residues; sequence FTDEASDTDNNEFNDIEL.

In the N-terminal section; belongs to the BMP lipoprotein family. It in the C-terminal section; belongs to the G-protein coupled receptor 3 family. GABA-B receptor subfamily.

It localises to the membrane. The polypeptide is Metabotropic glutamate receptor-like protein H (grlH) (Dictyostelium discoideum (Social amoeba)).